An 80-amino-acid chain; its full sequence is uncharacterized protein (80 aa).

Residues 1–15 (MVKLSFTLRFGDVWV) form the signal peptide.

This is an uncharacterized protein from Archaeoglobus fulgidus (strain ATCC 49558 / DSM 4304 / JCM 9628 / NBRC 100126 / VC-16).